We begin with the raw amino-acid sequence, 430 residues long: MDIPVNAAKPGRRRYLTLVMIFITVVICYVDRANLAVASAHIQEEFGITKAEMGYVFSAFAWLYTLCQIPGGWFLDRVGSRVTYFIAIFGWSVATLFQGFATGLMSLIGLRAITGIFEAPAFPTNNRMVTSWFPEHERASAVGFYTSGQFVGLAFLTPLLIWIQEMLSWHWVFIVTGGIGIIWSLIWFKVYQPPRLTKGISKAELDYIRDGGGLVDGDAPVKKEARQPLTAKDWKLVFHRKLIGVYLGQFAVASTLWFFLTWFPNYLTQEKGITALKAGFMTTVPFLAAFVGVLLSGWVADLLVRKGFSLGFARKTPIICGLLISTCIMGANYTNDPMMIMCLMALAFFGNGFASITWSLVSSLAPMRLIGLTGGVFNFAGGLGGITVPLVVGYLAQGYGFAPALVYISAVALIGALSYILLVGDVKRVG.

Over 1-17 (MDIPVNAAKPGRRRYLT) the chain is Cytoplasmic. The chain crosses the membrane as a helical span at residues 18–39 (LVMIFITVVICYVDRANLAVAS). Residues Y29 and R32 each contribute to the D-galactonate site. The Periplasmic portion of the chain corresponds to 40 to 50 (AHIQEEFGITK). The helical transmembrane segment at 51–74 (AEMGYVFSAFAWLYTLCQIPGGWF) threads the bilayer. Position 64 (Y64) interacts with D-galactonate. The Cytoplasmic portion of the chain corresponds to 75–81 (LDRVGSR). Residues 82 to 100 (VTYFIAIFGWSVATLFQGF) form a helical membrane-spanning segment. Residues 101 to 103 (ATG) lie on the Periplasmic side of the membrane. Residues 104 to 125 (LMSLIGLRAITGIFEAPAFPTN) form a helical membrane-spanning segment. The Cytoplasmic segment spans residues 126–141 (NRMVTSWFPEHERASA). Residues 142–164 (VGFYTSGQFVGLAFLTPLLIWIQ) traverse the membrane as a helical segment. Topologically, residues 165-168 (EMLS) are periplasmic. A helical membrane pass occupies residues 169 to 190 (WHWVFIVTGGIGIIWSLIWFKV). The Cytoplasmic segment spans residues 191 to 241 (YQPPRLTKGISKAELDYIRDGGGLVDGDAPVKKEARQPLTAKDWKLVFHRK). Residues 242 to 267 (LIGVYLGQFAVASTLWFFLTWFPNYL) traverse the membrane as a helical segment. Over 268 to 276 (TQEKGITAL) the chain is Periplasmic. A helical membrane pass occupies residues 277 to 297 (KAGFMTTVPFLAAFVGVLLSG). Over 298 to 314 (WVADLLVRKGFSLGFAR) the chain is Cytoplasmic. The helical transmembrane segment at 315 to 333 (KTPIICGLLISTCIMGANY) threads the bilayer. The Periplasmic segment spans residues 334 to 336 (TND). Residues 337–354 (PMMIMCLMALAFFGNGFA) form a helical membrane-spanning segment. The Cytoplasmic segment spans residues 355 to 373 (SITWSLVSSLAPMRLIGLT). Residue W358 coordinates D-galactonate. A helical membrane pass occupies residues 374–395 (GGVFNFAGGLGGITVPLVVGYL). Residues 396-400 (AQGYG) lie on the Periplasmic side of the membrane. The chain crosses the membrane as a helical span at residues 401–423 (FAPALVYISAVALIGALSYILLV). Residues 424 to 430 (GDVKRVG) lie on the Cytoplasmic side of the membrane.

This sequence belongs to the major facilitator superfamily. Phthalate permease family.

Its subcellular location is the cell inner membrane. The catalysed reaction is D-galactonate(in) + H(+)(in) = D-galactonate(out) + H(+)(out). In terms of biological role, involved in D-galactonate metabolism. Catalyzes the proton-dependent uptake of galactonate into the cell. In Escherichia coli O6:H1 (strain CFT073 / ATCC 700928 / UPEC), this protein is D-galactonate transporter (dgoT).